A 175-amino-acid polypeptide reads, in one-letter code: Inosine/xanthosine triphosphatase (175 aa).

8–13 (TTNPAK) contacts substrate. Mg(2+) is bound by residues Asp38 and Glu68. Substrate is bound at residue 68 to 69 (EA).

This sequence belongs to the YjjX NTPase family. Homodimer. The cofactor is Mg(2+). It depends on Mn(2+) as a cofactor.

It carries out the reaction XTP + H2O = XDP + phosphate + H(+). It catalyses the reaction ITP + H2O = IDP + phosphate + H(+). In terms of biological role, phosphatase that hydrolyzes non-canonical purine nucleotides such as XTP and ITP to their respective diphosphate derivatives. Probably excludes non-canonical purines from DNA/RNA precursor pool, thus preventing their incorporation into DNA/RNA and avoiding chromosomal lesions. The chain is Inosine/xanthosine triphosphatase from Yersinia enterocolitica serotype O:8 / biotype 1B (strain NCTC 13174 / 8081).